Consider the following 239-residue polypeptide: Large ribosomal subunit protein uL30 (239 aa).

The tract at residues 1–22 (MEGVMSEAPQSSIRKKEYEARM) is disordered.

This sequence belongs to the universal ribosomal protein uL30 family.

In Encephalitozoon cuniculi (strain GB-M1) (Microsporidian parasite), this protein is Large ribosomal subunit protein uL30 (RPL7).